The chain runs to 183 residues: Large ribosomal subunit protein uL5 (183 aa).

This sequence belongs to the universal ribosomal protein uL5 family. Part of the 50S ribosomal subunit; part of the 5S rRNA/L5/L18/L25 subcomplex. Contacts the 5S rRNA and the P site tRNA. Forms a bridge to the 30S subunit in the 70S ribosome.

This is one of the proteins that bind and probably mediate the attachment of the 5S RNA into the large ribosomal subunit, where it forms part of the central protuberance. In the 70S ribosome it contacts protein S13 of the 30S subunit (bridge B1b), connecting the 2 subunits; this bridge is implicated in subunit movement. Contacts the P site tRNA; the 5S rRNA and some of its associated proteins might help stabilize positioning of ribosome-bound tRNAs. In Chlorobaculum tepidum (strain ATCC 49652 / DSM 12025 / NBRC 103806 / TLS) (Chlorobium tepidum), this protein is Large ribosomal subunit protein uL5.